The chain runs to 832 residues: Tuftelin-interacting protein 11 (832 aa).

Disordered regions lie at residues 1–21 (MSMSHLYGRRGDEEEEDGVEI) and 33–145 (NEFN…GNWE). 2 stretches are compositionally biased toward basic and acidic residues: residues 36–49 (NPDRRRYRQTKEEA) and 88–99 (TAAEEKAEREGS). Over residues 121–130 (TGGSFKTSQR) the composition is skewed to polar residues. The G-patch domain occupies 148–194 (TRGIGQKLLQKMGYVPGKGLGKNAQGIVNPIEAKLRKGKGAVGAYGS). Serine 209 is modified (phosphoserine).

Belongs to the TFP11/STIP family. Identified in the spliceosome C complex.

The protein resides in the nucleus. Functionally, involved in pre-mRNA splicing, specifically in spliceosome disassembly during late-stage splicing events. This Danio rerio (Zebrafish) protein is Tuftelin-interacting protein 11 (tfip11).